A 299-amino-acid chain; its full sequence is Peroxisomal biogenesis factor 19 (299 aa).

Residues 1–63 form a disordered region; it reads MAAAEEDYGV…SPGDTAKDSL (63 aa). An N-acetylalanine modification is found at Ala-2. The segment at 2–56 is docking to the peroxisome membrane and binding to PEX3; the sequence is AAAEEDYGVGAEADRELEELLESALDDFDKAKPSPAPPSTTTAPDASGPQKRSPG. Positions 2 to 91 are necessary for PEX19 function on peroxisome biogenesis; sequence AAAEEDYGVG…QATAEFEKAM (90 aa). Positions 16 to 27 are enriched in acidic residues; the sequence is RELEELLESALD. Ser-35, Ser-54, and Ser-66 each carry phosphoserine. Phosphothreonine is present on Thr-236. The residue at position 296 (Cys-296) is a Cysteine methyl ester. Cys-296 carries the S-farnesyl cysteine lipid modification. Residues 297-299 constitute a propeptide, removed in mature form; that stretch reads LIM.

The protein belongs to the peroxin-19 family. Interacts with a broad range of peroxisomal membrane proteins, including PEX3, PEX10, PEX11A, PEX11B, PEX12, PEX13, PEX14 and PEX16, PXMP2/PMP22, PXMP4/PMP24, SLC25A17/PMP34, ABCD1/ALDP, ABCD2/ALDRP, and ABCD3/PMP70. Also interacts with the tumor suppressor CDKN2A/p19ARF.

The protein resides in the cytoplasm. It localises to the peroxisome membrane. Its function is as follows. Necessary for early peroxisomal biogenesis. Acts both as a cytosolic chaperone and as an import receptor for peroxisomal membrane proteins (PMPs). Binds and stabilizes newly synthesized PMPs in the cytoplasm by interacting with their hydrophobic membrane-spanning domains, and targets them to the peroxisome membrane by binding to the integral membrane protein PEX3. Excludes CDKN2A from the nucleus and prevents its interaction with MDM2, which results in active degradation of TP53. The chain is Peroxisomal biogenesis factor 19 (PEX19) from Pongo abelii (Sumatran orangutan).